Reading from the N-terminus, the 159-residue chain is Ecotin (159 aa).

The signal sequence occupies residues 1–22 (MRPTPLSTILALTMAATAPAMA). The cysteines at positions 68 and 105 are disulfide-linked.

This sequence belongs to the protease inhibitor I11 (ecotin) family. As to quaternary structure, homodimer.

It localises to the periplasm. In terms of biological role, general inhibitor of family S1 serine proteases. This chain is Ecotin, found in Pseudomonas putida (strain W619).